Reading from the N-terminus, the 398-residue chain is Flavin-containing monooxygenase ustF1 (398 aa).

Residues 1 to 22 (MTVSQVRRVAVIGAGISGVVST) form the signal peptide. 13 to 18 (GAGISG) is a binding site for FAD. N-linked (GlcNAc...) asparagine glycosylation is found at N53, N57, N119, and N126. 194 to 199 (GGGVSS) lines the NADP(+) pocket. Residues N236, N243, and N271 are each glycosylated (N-linked (GlcNAc...) asparagine).

Belongs to the FMO family.

The protein operates within mycotoxin biosynthesis. Flavin-containing monooxygenase; part of the gene cluster that mediates the biosynthesis of the secondary metabolite ustiloxin B, an antimitotic tetrapeptide. First, ustA is processed by the subtilisin-like endoprotease Kex2 that is outside the ustiloxin B gene cluster, at the C-terminal side of Arg-Lys, after transfer to Golgi apparatus through the endoplasmic reticulum (ER). Cleavage by KEX2 generates 16 peptides YAIG-I to YAIG-XVI. To process the precursor peptide further, at least two peptidases are necessary to cleave the N-terminal and C-terminal sides of the Tyr-Ala-Ile-Gly core peptide which serves as backbone for the synthesis of ustiloxin B, through cyclization and modification of the tyrosine with a non-protein coding amino acid, norvaline. One of the two peptidases must be the serine peptidase ustP; and the other pepdidase is probably ustH. Macrocyclization of the core peptide derived from ustA requires the tyrosinase ustQ, as well as the homologous oxidases ustYa and ustYb, and leads to the production of the first cyclization product N-desmethylustiloxin F. For the formation of N-desmethylustiloxin F, three oxidation steps are required, hydroxylation at the benzylic position, hydroxylation at either the aromatic ring of Tyr or beta-position of Ile, and oxidative cyclization. UstQ may catalyze the oxidation of a phenol moiety, whereas the ustYa and ustYb are most likely responsible for the remaining two-step oxidations. N-desmethylustiloxin F is then methylated by ustM to yield ustiloxin F which in turn substrate of the cytochrome P450 monooxygenase ustC which catalyzes the formation of S-deoxyustiloxin H. The flavoprotein monooxygenases ustF1 and ustF2 then participate in the modification of the side chain of S-deoxyustiloxin H, leading to the synthesis of an oxime intermediate, via ustiloxin H. Finally, carboxylative dehydration performed by the cysteine desulfurase-like protein ustD yields ustiloxin B. The polypeptide is Flavin-containing monooxygenase ustF1 (Aspergillus flavus (strain ATCC 200026 / FGSC A1120 / IAM 13836 / NRRL 3357 / JCM 12722 / SRRC 167)).